Consider the following 543-residue polypeptide: Kelch repeat and BTB domain-containing protein 4 (543 aa).

The BTB domain maps to 70-137 (ADVTISVEGR…IYHGTVKLRA (68 aa)). Positions 172–264 (CLQVMWLADR…SLKEIGENVH (93 aa)) constitute a BACK domain. Kelch repeat units follow at residues 264–310 (HIYL…KHGG), 311–353 (DLYV…SVPG), 356–403 (AIYS…NLNG), 405–455 (IYLL…VHKD), and 457–505 (VFIV…YVFR).

In terms of assembly, component of the BCR(KBTBD4) E3 ubiquitin ligase complex, at least composed of CUL3, KBTBD4 and RBX1.

In terms of biological role, substrate-specific adapter of a BCR (BTB-CUL3-RBX1) E3 ubiquitin ligase complex which targets CoREST corepressor complex components RCOR1, KDM1A/LSD1 and HDAC2 for proteasomal degradation. RCOR1 is likely to be the primary target while degradation of KDM1A and HDAC2 is likely due to their association with RCOR1. Also targets RCOR3, MIER2 and MIER3 for proteasomal degradation as well as associated proteins ZNF217 and RREB1. Degradation is dependent on the presence of an ELM2 domain in the target proteins. In Macaca fascicularis (Crab-eating macaque), this protein is Kelch repeat and BTB domain-containing protein 4 (KBTBD4).